Here is a 293-residue protein sequence, read N- to C-terminus: Prohibitin-2 (293 aa).

Residues 21–41 (FGGGFGLLALGGVGLLALSSL) traverse the membrane as a helical; Signal-anchor for type II membrane protein segment. Residues 190-235 (GREYAAAIEAKQVAQQEAERARFLVEKALQDKRSIIVKAEGEAQSA) are a coiled coil.

Belongs to the prohibitin family. In terms of assembly, the mitochondrial prohibitin complex consists of two subunits (PHB1 and PHB2), assembled into a membrane-associated ring-shaped supercomplex of approximately 1 mDa.

It localises to the mitochondrion inner membrane. The protein resides in the cytoplasm. Its subcellular location is the nucleus. It is found in the cell membrane. Protein with pleiotropic attributes mediated in a cell-compartment- and tissue-specific manner, which include the plasma membrane-associated cell signaling functions, mitochondrial chaperone, and transcriptional co-regulator of transcription factors and sex steroid hormones in the nucleus. In terms of biological role, in the mitochondria, together with PHB, forms large ring complexes (prohibitin complexes) in the inner mitochondrial membrane (IMM) and functions as a chaperone protein that stabilizes mitochondrial respiratory enzymes and maintains mitochondrial integrity in the IMM, which is required for mitochondrial morphogenesis, neuronal survival, and normal lifespan. Its function is as follows. In the nucleus, serves as transcriptional co-regulator. The polypeptide is Prohibitin-2 (phbB) (Dictyostelium discoideum (Social amoeba)).